Reading from the N-terminus, the 302-residue chain is tRNA-cytidine(32) 2-sulfurtransferase (302 aa).

The PP-loop motif motif lies at 57–62 (SGGKDS). Positions 132, 135, and 223 each coordinate [4Fe-4S] cluster.

The protein belongs to the TtcA family. Homodimer. Requires Mg(2+) as cofactor. It depends on [4Fe-4S] cluster as a cofactor.

It localises to the cytoplasm. It carries out the reaction cytidine(32) in tRNA + S-sulfanyl-L-cysteinyl-[cysteine desulfurase] + AH2 + ATP = 2-thiocytidine(32) in tRNA + L-cysteinyl-[cysteine desulfurase] + A + AMP + diphosphate + H(+). It functions in the pathway tRNA modification. In terms of biological role, catalyzes the ATP-dependent 2-thiolation of cytidine in position 32 of tRNA, to form 2-thiocytidine (s(2)C32). The sulfur atoms are provided by the cysteine/cysteine desulfurase (IscS) system. The chain is tRNA-cytidine(32) 2-sulfurtransferase from Marinobacter nauticus (strain ATCC 700491 / DSM 11845 / VT8) (Marinobacter aquaeolei).